The sequence spans 452 residues: GTPase Der (452 aa).

2 EngA-type G domains span residues 9–170 (KIIA…PEED) and 185–362 (LQIV…KTWN). GTP contacts are provided by residues 15–22 (GRPNVGKS), 62–66 (DTPGF), 124–127 (NKCE), 191–198 (GRPNAGKS), 238–242 (DTAGL), and 303–306 (NKWD). Residues 363–448 (KKITTSKLNE…PIRFNYIKTK (86 aa)) enclose the KH-like domain.

This sequence belongs to the TRAFAC class TrmE-Era-EngA-EngB-Septin-like GTPase superfamily. EngA (Der) GTPase family. Associates with the 50S ribosomal subunit.

Its function is as follows. GTPase that plays an essential role in the late steps of ribosome biogenesis. This chain is GTPase Der, found in Rickettsia bellii (strain OSU 85-389).